The chain runs to 116 residues: Antimicrobial peptide 1b (116 aa).

The first 34 residues, 1 to 34 (MKPHMSATVLRAPRVAAILLAVVLAAVLATAVNG), serve as a signal peptide directing secretion. Residues 35–77 (AQRCGDQARGAKCPNCLCCGKYGFCGSGDAYCGAGSCQSQCRG) enclose the Chitin-binding type-1 domain. 5 disulfides stabilise this stretch: Cys-38-Cys-53, Cys-47-Cys-59, Cys-50-Cys-78, Cys-52-Cys-66, and Cys-71-Cys-75. A propeptide spanning residues 80–116 (DDVVGQALPAEPGSTRATAASSASARGLNLTATTGGP) is cleaved from the precursor. The disordered stretch occupies residues 89 to 116 (AEPGSTRATAASSASARGLNLTATTGGP). The span at 93–105 (STRATAASSASAR) shows a compositional bias: low complexity.

Functionally, binds chitin. Has antifungal activity against the fungi F.solani (IC(50)=5 ug/ml), F.verticillioides (IC(50)=30 ug/ml), F.oxysporum (IC(50)=5 ug/ml), B.sorokiniana (IC(50)=5 ug/ml), B.cinerea (IC(50)=20 ug/ml) and N.crassa (IC(50)=10 ug/ml). Inhibits hyphal elongation and causes browning of hyphae in F.oxysporum. Causes destruction and discoloration of spores in B.sorokiniana. Inhibits the development of disease caused by the fungus P.infestans on potato tubers. Has antibacterial activity against the Gram-negative bacteria P.syringae and E.carotovora, and the Gram-positive bacterium C.michiganensis. Its function is as follows. Has antifungal activity against F.verticillioides (IC(50)=2.7 ug/ml). At concentrations between 45 uM and 225 uM, inhibits activity of metalloproteinase fungalysin Fv-cpm from F.verticillioides. The polypeptide is Antimicrobial peptide 1b (Triticum kiharae (Wheat)).